The sequence spans 373 residues: 3 beta-hydroxysteroid dehydrogenase/Delta 5--&gt;4-isomerase (373 aa).

The Proton acceptor role is filled by tyrosine 155. NAD(+) is bound at residue lysine 159. Residues 288–308 (ISLQYWLAFLLEIVSFLLSPI) traverse the membrane as a helical segment.

Belongs to the 3-beta-HSD family.

The protein localises to the endoplasmic reticulum membrane. It localises to the mitochondrion membrane. It carries out the reaction a 3beta-hydroxy-Delta(5)-steroid + NAD(+) = a 3-oxo-Delta(5)-steroid + NADH + H(+). It catalyses the reaction a 3-oxo-Delta(5)-steroid = a 3-oxo-Delta(4)-steroid. Its pathway is lipid metabolism; steroid biosynthesis. Functionally, 3-beta-HSD is a bifunctional enzyme, that catalyzes the oxidative conversion of Delta(5)-ene-3-beta-hydroxy steroid, and the oxidative conversion of ketosteroids. The 3-beta-HSD enzymatic system plays a crucial role in the biosynthesis of all classes of hormonal steroids. The sequence is that of 3 beta-hydroxysteroid dehydrogenase/Delta 5--&gt;4-isomerase (HSD3B) from Bos taurus (Bovine).